Reading from the N-terminus, the 212-residue chain is Leucine efflux protein (212 aa).

6 consecutive transmembrane segments (helical) span residues 12–32, 49–69, 71–91, 122–142, 153–173, and 188–208; these read TYLVGAIFIVLVPGPNTLFVL, GVFIGDAVLMFLAWAGVATLI, TTPILFNIVRYLGAFYLLYLG, ILSLTNPKAILFYVSFFVQFI, FFILATTLELVSFCYLSFLII, and LAKVGNSLIGLMFVGFAARLA.

The protein belongs to the Rht family.

The protein resides in the cell inner membrane. It carries out the reaction L-leucine(in) + H(+)(out) = L-leucine(out) + H(+)(in). Exporter of leucine. This chain is Leucine efflux protein (leuE), found in Escherichia coli O6:K15:H31 (strain 536 / UPEC).